The sequence spans 791 residues: Probable potassium transporter 11 (791 aa).

At methionine 1–arginine 49 the chain is on the cytoplasmic side. The chain crosses the membrane as a helical span at residues leucine 50–phenylalanine 70. The Extracellular segment spans residues tyrosine 71–alanine 87. A helical membrane pass occupies residues leucine 88–leucine 108. Residues arginine 109 to leucine 175 are Cytoplasmic-facing. The chain crosses the membrane as a helical span at residues leucine 176–isoleucine 196. At serine 197–aspartate 215 the chain is on the extracellular side. A glycan (N-linked (GlcNAc...) asparagine) is linked at asparagine 211. Residues valine 216 to threonine 236 traverse the membrane as a helical segment. Over aspartate 237–lysine 238 the chain is Cytoplasmic. Residues valine 239–alanine 259 traverse the membrane as a helical segment. At leucine 260–serine 289 the chain is on the extracellular side. The helical transmembrane segment at tryptophan 290 to leucine 310 threads the bilayer. Topologically, residues cysteine 311–valine 315 are cytoplasmic. A helical transmembrane segment spans residues phenylalanine 316 to alanine 338. Residues alanine 339–serine 359 are Extracellular-facing. The chain crosses the membrane as a helical span at residues isoleucine 360–isoleucine 380. Topologically, residues serine 381–glutamine 411 are cytoplasmic. Residues isoleucine 412–phenylalanine 432 form a helical membrane-spanning segment. Residues lysine 433–threonine 444 are Extracellular-facing. Residue asparagine 434 is glycosylated (N-linked (GlcNAc...) asparagine). Residues alanine 445–tryptophan 465 traverse the membrane as a helical segment. Residues lysine 466–histidine 468 are Cytoplasmic-facing. The chain crosses the membrane as a helical span at residues tryptophan 469–alanine 489. The Extracellular segment spans residues cysteine 490–glutamine 496. The helical transmembrane segment at glycine 497–phenylalanine 517 threads the bilayer. Residues cysteine 518–isoleucine 791 are Cytoplasmic-facing.

Belongs to the HAK/KUP transporter (TC 2.A.72.3) family.

Its subcellular location is the membrane. Functionally, high-affinity potassium transporter. This Oryza sativa subsp. japonica (Rice) protein is Probable potassium transporter 11.